Reading from the N-terminus, the 509-residue chain is Surface lipoprotein assembly modifier (509 aa).

Residues 1 to 32 (MNLMINLKPLTFLPFFGRLVFLSGVIYNTAWA) form the signal peptide. An N-terminal domain region spans residues 33-204 (NTVIPVDNSR…SYIDTINQRD (172 aa)). A disordered region spans residues 43-72 (PDETFSQTSPKQHLFSQKPKPTEPTSSASS). Positions 46-57 (TFSQTSPKQHLF) are enriched in polar residues. A TPR repeat occupies 120-153 (FLLKWAQAVVARKQGKLNESVRLYRQIIAEKPNL). Residues 205–509 (SWNVYGGVNY…RIYLTFSKTF (305 aa)) are C-terminal probable beta barrel. Transmembrane regions (beta stranded) follow at residues 206-216 (WNVYGGVNYLH), 245-256 (LSYFINLSKNWS), 261-270 (FFTEFSADIN), 284-294 (STRLNLGGGYR), 298-308 (TEVKLMPFVEQ), 331-341 (SGINLDVDYWL), 345-355 (WKISTVLEYTE), 371-381 (YSISNTLIYMP), 386-395 (FWFVGLDYYQ), 408-417 (QGIRLGWGQE), 423-432 (STRLQTSYAT), 461-470 (GVNFTIWHRS), 476-485 (ITPKITWAYQ), and 499-509 (NRIYLTFSKTF).

The protein belongs to the Slam family.

It localises to the cell outer membrane. In terms of biological role, required for correct export to the cell surface of some cell outer membrane lipoproteins (tested with PM1514) upon heterologous expression in E.coli and probably also in Pasteurella. The chain is Surface lipoprotein assembly modifier from Pasteurella multocida (strain Pm70).